A 324-amino-acid chain; its full sequence is MKPSVILYKALPDDLLQRLQEHFTVHQVANLSPQTVEQNAAIFAEAEGLLGSNENVDAALLEKMPKLRATSTISVGYDNFDVDALTARKILLMHTPTVLTETVADTLMALVLSTARRVVEVAERVKAGEWTASIGPDWYGTDVHHKTLGIVGMGRIGMALAQRAHFGFNMPILYNARRHHKEAEERFNARYCDLDTLLQESDFVCLILPLTDETHHLFGAEQFAKMKPSAIFINAGRGPVVDENALIAALQKGEIHAAGLDVFEQEPLSVDSPLLSMANVVAVPHIGSATHETRYGMAACAVDNLIDALQGKVEKNCVNPHVAD.

Active-site residues include Arg-237 and Glu-266. His-285 functions as the Proton donor in the catalytic mechanism.

This sequence belongs to the D-isomer specific 2-hydroxyacid dehydrogenase family. GhrB subfamily. As to quaternary structure, homodimer.

The protein resides in the cytoplasm. The catalysed reaction is glycolate + NADP(+) = glyoxylate + NADPH + H(+). The enzyme catalyses (R)-glycerate + NAD(+) = 3-hydroxypyruvate + NADH + H(+). It carries out the reaction (R)-glycerate + NADP(+) = 3-hydroxypyruvate + NADPH + H(+). In terms of biological role, catalyzes the NADPH-dependent reduction of glyoxylate and hydroxypyruvate into glycolate and glycerate, respectively. The chain is Glyoxylate/hydroxypyruvate reductase B from Shigella boydii serotype 4 (strain Sb227).